The primary structure comprises 246 residues: 3-deoxy-manno-octulosonate cytidylyltransferase (246 aa).

The protein belongs to the KdsB family.

It localises to the cytoplasm. The catalysed reaction is 3-deoxy-alpha-D-manno-oct-2-ulosonate + CTP = CMP-3-deoxy-beta-D-manno-octulosonate + diphosphate. It functions in the pathway nucleotide-sugar biosynthesis; CMP-3-deoxy-D-manno-octulosonate biosynthesis; CMP-3-deoxy-D-manno-octulosonate from 3-deoxy-D-manno-octulosonate and CTP: step 1/1. Its pathway is bacterial outer membrane biogenesis; lipopolysaccharide biosynthesis. Activates KDO (a required 8-carbon sugar) for incorporation into bacterial lipopolysaccharide in Gram-negative bacteria. The polypeptide is 3-deoxy-manno-octulosonate cytidylyltransferase (Rickettsia prowazekii (strain Madrid E)).